We begin with the raw amino-acid sequence, 238 residues long: 1-(5-phosphoribosyl)-5-[(5-phosphoribosylamino)methylideneamino] imidazole-4-carboxamide isomerase (238 aa).

Residue aspartate 8 is the Proton acceptor of the active site. Aspartate 129 acts as the Proton donor in catalysis.

Belongs to the HisA/HisF family.

Its subcellular location is the cytoplasm. The catalysed reaction is 1-(5-phospho-beta-D-ribosyl)-5-[(5-phospho-beta-D-ribosylamino)methylideneamino]imidazole-4-carboxamide = 5-[(5-phospho-1-deoxy-D-ribulos-1-ylimino)methylamino]-1-(5-phospho-beta-D-ribosyl)imidazole-4-carboxamide. It functions in the pathway amino-acid biosynthesis; L-histidine biosynthesis; L-histidine from 5-phospho-alpha-D-ribose 1-diphosphate: step 4/9. This is 1-(5-phosphoribosyl)-5-[(5-phosphoribosylamino)methylideneamino] imidazole-4-carboxamide isomerase from Paracoccus denitrificans (strain Pd 1222).